A 236-amino-acid polypeptide reads, in one-letter code: 2,3,4,5-tetrahydropyridine-2,6-dicarboxylate N-acetyltransferase (236 aa).

Belongs to the transferase hexapeptide repeat family. DapH subfamily.

It catalyses the reaction (S)-2,3,4,5-tetrahydrodipicolinate + acetyl-CoA + H2O = L-2-acetamido-6-oxoheptanedioate + CoA. Its pathway is amino-acid biosynthesis; L-lysine biosynthesis via DAP pathway; LL-2,6-diaminopimelate from (S)-tetrahydrodipicolinate (acetylase route): step 1/3. Functionally, catalyzes the transfer of an acetyl group from acetyl-CoA to tetrahydrodipicolinate. This Clostridium botulinum (strain Eklund 17B / Type B) protein is 2,3,4,5-tetrahydropyridine-2,6-dicarboxylate N-acetyltransferase.